Consider the following 429-residue polypeptide: L-dopachrome tautomerase yellow-f (429 aa).

Positions 1–23 (MLSLDVLLLCAISGFQLLISADG) are cleaved as a signal peptide. Residues asparagine 133 and asparagine 372 are each glycosylated (N-linked (GlcNAc...) asparagine).

It belongs to the major royal jelly protein family.

The protein localises to the secreted. It catalyses the reaction L-dopachrome = 5,6-dihydroxyindole-2-carboxylate. Its pathway is pigment biosynthesis; melanin biosynthesis. Functionally, tautomerization of L-dopachrome with decarboxylation to give 5,6-dihydroxyindole (DHI). Also catalyzes the tautomerization of the methyl ester of L-dopachrome and dopamine chrome. May play a role in melanization reactions during late pupal and adult stages. May play a role in melanization reactions during larval and early pupal stages. The polypeptide is L-dopachrome tautomerase yellow-f (Drosophila melanogaster (Fruit fly)).